Here is a 186-residue protein sequence, read N- to C-terminus: Ran guanine nucleotide release factor (186 aa).

Positions 27–70 (DLRPVPDHQEVFCHRVTDQSLIVELLELQAHVQGEEAARYHFED) are interaction with RAN.

It belongs to the MOG1 family. As to quaternary structure, monomer. Interacts with RAN, both RAN-GTP and RAN-GDP. Competes with RCC1 for a common binding site on RAN and thereby inhibits RCC1-mediated nucleotide exchange. Forms a complex with RAN-GTP and RANBP1. Interacts with the cytoplasmic loop 2 of SCN5A.

It is found in the nucleus. The protein localises to the cytoplasm. The protein resides in the perinuclear region. It localises to the cell membrane. In terms of biological role, may regulate the intracellular trafficking of RAN. Promotes guanine nucleotide release from RAN and inhibits binding of new GTP by preventing the binding of the RAN guanine nucleotide exchange factor RCC1. Regulates the levels of GTP-bound RAN in the nucleus, and thereby plays a role in the regulation of RAN-dependent mitotic spindle dynamics. Enhances the expression of SCN5A at the cell membrane in cardiomyocytes. This is Ran guanine nucleotide release factor (RANGRF) from Bos taurus (Bovine).